The chain runs to 87 residues: Small ribosomal subunit protein uS17 (87 aa).

The protein belongs to the universal ribosomal protein uS17 family. As to quaternary structure, part of the 30S ribosomal subunit.

In terms of biological role, one of the primary rRNA binding proteins, it binds specifically to the 5'-end of 16S ribosomal RNA. In Geobacillus sp. (strain WCH70), this protein is Small ribosomal subunit protein uS17.